A 201-amino-acid chain; its full sequence is Small ribosomal subunit protein uS4 (201 aa).

The S4 RNA-binding domain maps to 91-157 (SRLDNVVYRA…VPFQIARETA (67 aa)).

This sequence belongs to the universal ribosomal protein uS4 family. Part of the 30S ribosomal subunit. Contacts protein S5. The interaction surface between S4 and S5 is involved in control of translational fidelity.

Functionally, one of the primary rRNA binding proteins, it binds directly to 16S rRNA where it nucleates assembly of the body of the 30S subunit. Its function is as follows. With S5 and S12 plays an important role in translational accuracy. This Mycolicibacterium paratuberculosis (strain ATCC BAA-968 / K-10) (Mycobacterium paratuberculosis) protein is Small ribosomal subunit protein uS4.